Here is a 23-residue protein sequence, read N- to C-terminus: Dahlein-4.1 (23 aa).

As to expression, expressed by the skin dorsal glands.

It localises to the secreted. Has no antimicrobial activity. The chain is Dahlein-4.1 from Ranoidea dahlii (Dahl's aquatic frog).